The sequence spans 301 residues: Porin (301 aa).

In terms of assembly, homotrimer.

Its subcellular location is the cell outer membrane. Its function is as follows. Forms channels that allow the passive diffusion of small hydrophilic solutes up to an exclusion limit of about 0.6 kDa. The polypeptide is Porin (Rhodobacter capsulatus (Rhodopseudomonas capsulata)).